Here is a 154-residue protein sequence, read N- to C-terminus: Deoxyuridine 5'-triphosphate nucleotidohydrolase (154 aa).

Residues Arg-64–Gly-66, Asn-77, Thr-81–Asp-83, and Lys-91 contribute to the substrate site.

It belongs to the dUTPase family. In terms of assembly, homotrimer. Mg(2+) is required as a cofactor.

The catalysed reaction is dUTP + H2O = dUMP + diphosphate + H(+). It functions in the pathway pyrimidine metabolism; dUMP biosynthesis; dUMP from dCTP (dUTP route): step 2/2. This enzyme is involved in nucleotide metabolism: it produces dUMP, the immediate precursor of thymidine nucleotides and it decreases the intracellular concentration of dUTP so that uracil cannot be incorporated into DNA. The sequence is that of Deoxyuridine 5'-triphosphate nucleotidohydrolase from Mycobacterium marinum (strain ATCC BAA-535 / M).